A 601-amino-acid polypeptide reads, in one-letter code: NADH-quinone oxidoreductase subunit C/D (601 aa).

Residues 1–191 form an NADH dehydrogenase I subunit C region; that stretch reads MKLTREFPSN…DPFMLDAVKQ (191 aa). The tract at residues 215–601 is NADH dehydrogenase I subunit D; the sequence is DYMFLNLGPN…IDFVMSDVDR (387 aa).

The protein in the N-terminal section; belongs to the complex I 30 kDa subunit family. In the C-terminal section; belongs to the complex I 49 kDa subunit family. In terms of assembly, NDH-1 is composed of 13 different subunits. Subunits NuoB, CD, E, F, and G constitute the peripheral sector of the complex.

It localises to the cell inner membrane. It catalyses the reaction a quinone + NADH + 5 H(+)(in) = a quinol + NAD(+) + 4 H(+)(out). NDH-1 shuttles electrons from NADH, via FMN and iron-sulfur (Fe-S) centers, to quinones in the respiratory chain. The immediate electron acceptor for the enzyme in this species is believed to be ubiquinone. Couples the redox reaction to proton translocation (for every two electrons transferred, four hydrogen ions are translocated across the cytoplasmic membrane), and thus conserves the redox energy in a proton gradient. This Aeromonas hydrophila subsp. hydrophila (strain ATCC 7966 / DSM 30187 / BCRC 13018 / CCUG 14551 / JCM 1027 / KCTC 2358 / NCIMB 9240 / NCTC 8049) protein is NADH-quinone oxidoreductase subunit C/D.